A 173-amino-acid chain; its full sequence is MTIILGIDPGSRITGYGVIRQVGRNLEYLGSGCIRTSAEDIPGRLKQIYAGVSEVITQFQPDTFAIEEVFMGKNASSALKLGQARGSAIVAAVNADLPVSEYAARLIKQAVVGTGAADKAQVQHMVCSVLKLPGKPQADAADALAVAICHAHTHKTLIAMSGKASSARRGRYR.

Residues Asp-8, Glu-67, and Asp-139 contribute to the active site. Mg(2+)-binding residues include Asp-8, Glu-67, and Asp-139.

The protein belongs to the RuvC family. Homodimer which binds Holliday junction (HJ) DNA. The HJ becomes 2-fold symmetrical on binding to RuvC with unstacked arms; it has a different conformation from HJ DNA in complex with RuvA. In the full resolvosome a probable DNA-RuvA(4)-RuvB(12)-RuvC(2) complex forms which resolves the HJ. Mg(2+) serves as cofactor.

It localises to the cytoplasm. The catalysed reaction is Endonucleolytic cleavage at a junction such as a reciprocal single-stranded crossover between two homologous DNA duplexes (Holliday junction).. In terms of biological role, the RuvA-RuvB-RuvC complex processes Holliday junction (HJ) DNA during genetic recombination and DNA repair. Endonuclease that resolves HJ intermediates. Cleaves cruciform DNA by making single-stranded nicks across the HJ at symmetrical positions within the homologous arms, yielding a 5'-phosphate and a 3'-hydroxyl group; requires a central core of homology in the junction. The consensus cleavage sequence is 5'-(A/T)TT(C/G)-3'. Cleavage occurs on the 3'-side of the TT dinucleotide at the point of strand exchange. HJ branch migration catalyzed by RuvA-RuvB allows RuvC to scan DNA until it finds its consensus sequence, where it cleaves and resolves the cruciform DNA. This chain is Crossover junction endodeoxyribonuclease RuvC, found in Photobacterium profundum (strain SS9).